A 298-amino-acid chain; its full sequence is Acetylglutamate kinase (298 aa).

Substrate is bound by residues 66–67 (GG), R88, and N193.

This sequence belongs to the acetylglutamate kinase family. ArgB subfamily.

It localises to the cytoplasm. The enzyme catalyses N-acetyl-L-glutamate + ATP = N-acetyl-L-glutamyl 5-phosphate + ADP. The protein operates within amino-acid biosynthesis; L-arginine biosynthesis; N(2)-acetyl-L-ornithine from L-glutamate: step 2/4. Its function is as follows. Catalyzes the ATP-dependent phosphorylation of N-acetyl-L-glutamate. The sequence is that of Acetylglutamate kinase from Methanosphaera stadtmanae (strain ATCC 43021 / DSM 3091 / JCM 11832 / MCB-3).